Reading from the N-terminus, the 472-residue chain is 2-amino-4-ketopentanoate thiolase beta subunit (472 aa).

K102 is subject to N6-(pyridoxal phosphate)lysine. Pyridoxal 5'-phosphate contacts are provided by residues N128 and 238 to 242; that span reads AGGGN.

This sequence belongs to the threonine synthase family. Heterodimer with OrtA. The cofactor is pyridoxal 5'-phosphate.

It carries out the reaction D-alanine + acetyl-CoA = (2R)-2-amino-4-oxopentanoate + CoA. Functionally, involved in the ornithine fermentation pathway. Catalyzes the thiolytic cleavage of 2-amino-4-ketopentanoate (AKP) with coenzyme A (CoA) to form acetyl-CoA and alanine. It is strictly specific for AKP. The polypeptide is 2-amino-4-ketopentanoate thiolase beta subunit (Unknown prokaryotic organism).